The primary structure comprises 193 residues: Ion-translocating oxidoreductase complex subunit A (193 aa).

Helical transmembrane passes span 5–25 (ALLF…FLGL), 39–59 (IGMG…SWLI), 62–82 (FILV…LVLA), 102–122 (LLGI…VVLL), 134–154 (TIYG…FAAI), and 171–191 (SIAL…TGLV).

Belongs to the NqrDE/RnfAE family. The complex is composed of six subunits: RnfA, RnfB, RnfC, RnfD, RnfE and RnfG.

Its subcellular location is the cell inner membrane. In terms of biological role, part of a membrane-bound complex that couples electron transfer with translocation of ions across the membrane. The protein is Ion-translocating oxidoreductase complex subunit A of Pectobacterium atrosepticum (strain SCRI 1043 / ATCC BAA-672) (Erwinia carotovora subsp. atroseptica).